A 123-amino-acid polypeptide reads, in one-letter code: Iron-sulfur cluster insertion protein ErpA (123 aa).

Cys-51, Cys-115, and Cys-117 together coordinate iron-sulfur cluster.

Belongs to the HesB/IscA family. In terms of assembly, homodimer. The cofactor is iron-sulfur cluster.

Its function is as follows. Required for insertion of 4Fe-4S clusters for at least IspG. This chain is Iron-sulfur cluster insertion protein ErpA, found in Halorhodospira halophila (strain DSM 244 / SL1) (Ectothiorhodospira halophila (strain DSM 244 / SL1)).